Consider the following 409-residue polypeptide: Phenoxybenzoate dioxygenase subunit alpha (409 aa).

The region spanning 45–149 is the Rieske domain; sequence WQPVALSADV…VEERYGLVFA (105 aa). Positions 85, 87, 104, and 107 each coordinate [2Fe-2S] cluster. Fe cation is bound by residues H210 and H215.

This sequence belongs to the bacterial ring-hydroxylating dioxygenase alpha subunit family. This dioxygenase system consists of two proteins: the alpha subunit (PobA) and a subunit (PobB) that acts as a ferredoxin and a ferredoxin reductase. It depends on [2Fe-2S] cluster as a cofactor. Fe cation is required as a cofactor.

It participates in aromatic compound metabolism; carboxydiphenyl ether degradation. Functionally, degrades exclusively diarylether compounds having carboxyl groups in the 3- or 4-position. Yields a hemiacetal that spontaneously hydrolyzes to phenol and protocatechuate. This chain is Phenoxybenzoate dioxygenase subunit alpha (pobA), found in Ectopseudomonas oleovorans (Pseudomonas oleovorans).